Reading from the N-terminus, the 353-residue chain is Protein RecA (353 aa).

Gly67–Thr74 is an ATP binding site.

Belongs to the RecA family.

The protein localises to the cytoplasm. In terms of biological role, can catalyze the hydrolysis of ATP in the presence of single-stranded DNA, the ATP-dependent uptake of single-stranded DNA by duplex DNA, and the ATP-dependent hybridization of homologous single-stranded DNAs. It interacts with LexA causing its activation and leading to its autocatalytic cleavage. The chain is Protein RecA from Chlamydia pneumoniae (Chlamydophila pneumoniae).